The sequence spans 288 residues: Polyisoprenoid diphosphate/phosphate phosphohydrolase PLPP6 (288 aa).

The tract at residues Met-1–Pro-82 is disordered. Over Met-1–Pro-127 the chain is Cytoplasmic. A helical transmembrane segment spans residues Leu-128–Cys-148. Over Leu-149 to Met-161 the chain is Lumenal. A helical membrane pass occupies residues Leu-162–Val-182. The interval Lys-179 to Pro-187 is phosphatase sequence motif I. Over Arg-183–His-223 the chain is Cytoplasmic. The phosphatase sequence motif II stretch occupies residues Pro-206 to His-209. The active-site Proton donors is His-209. Residues Leu-224–Ser-244 traverse the membrane as a helical segment. Residues Ser-244–Asp-255 form a phosphatase sequence motif III region. At Arg-245–Asp-255 the chain is on the lumenal side. His-251 functions as the Nucleophile in the catalytic mechanism. Residues Val-256 to Ser-276 form a helical membrane-spanning segment. Over Pro-277–His-288 the chain is Cytoplasmic.

This sequence belongs to the PA-phosphatase related phosphoesterase family.

It localises to the endoplasmic reticulum membrane. The protein localises to the nucleus envelope. It is found in the nucleus inner membrane. It carries out the reaction presqualene diphosphate + H2O = presqualene phosphate + phosphate + H(+). The enzyme catalyses presqualene phosphate + H2O = presqualene alcohol + phosphate. The catalysed reaction is (2E,6E)-farnesyl diphosphate + H2O = (2E,6E)-farnesyl phosphate + phosphate + H(+). It catalyses the reaction (2E,6E)-farnesyl phosphate + H2O = (2E,6E)-farnesol + phosphate. It carries out the reaction (2E,6E,10E)-geranylgeranyl diphosphate + H2O = (2E,6E,10E)-geranylgeranyl phosphate + phosphate + H(+). The enzyme catalyses (2E,6E,10E)-geranylgeranyl phosphate + H2O = (2E,6E,10E)-geranylgeraniol + phosphate. The catalysed reaction is (2E)-geranyl diphosphate + H2O = (2E)-geranyl phosphate + phosphate + H(+). It catalyses the reaction (2E)-geranyl phosphate + H2O = (2E)-geraniol + phosphate. It carries out the reaction 1,2-dihexadecanoyl-sn-glycero-3-phosphate + H2O = 1,2-dihexadecanoyl-sn-glycerol + phosphate. In terms of biological role, magnesium-independent polyisoprenoid diphosphatase that catalyzes the sequential dephosphorylation of presqualene, farnesyl, geranyl and geranylgeranyl diphosphates. May regulate the biosynthesis of cholesterol and related sterols by dephosphorylating presqualene and farnesyl diphosphate, two key intermediates in this biosynthetic pathway. May also play a role in protein prenylation by acting on farnesyl diphosphate and its derivative geranylgeranyl diphosphate, two precursors for the addition of isoprenoid anchors to membrane proteins. Has a lower activity towards phosphatidic acid (PA), but through phosphatidic acid dephosphorylation may participate in the biosynthesis of phospholipids and triacylglycerols. May also act on ceramide-1-P, lysophosphatidic acid (LPA) and sphing-4-enine 1-phosphate/sphingosine-1-phosphate. The polypeptide is Polyisoprenoid diphosphate/phosphate phosphohydrolase PLPP6 (plpp6) (Danio rerio (Zebrafish)).